The sequence spans 197 residues: Recombination protein RecR (197 aa).

The segment at 57–72 (CSTCFGITESDPCHLC) adopts a C4-type zinc-finger fold. Residues 79–174 (ASICVVEEPQ…KVTRLAHGIP (96 aa)) form the Toprim domain.

Belongs to the RecR family.

In terms of biological role, may play a role in DNA repair. It seems to be involved in an RecBC-independent recombinational process of DNA repair. It may act with RecF and RecO. This chain is Recombination protein RecR, found in Geotalea uraniireducens (strain Rf4) (Geobacter uraniireducens).